Reading from the N-terminus, the 362-residue chain is Aminomethyltransferase (362 aa).

It belongs to the GcvT family. The glycine cleavage system is composed of four proteins: P, T, L and H.

The enzyme catalyses N(6)-[(R)-S(8)-aminomethyldihydrolipoyl]-L-lysyl-[protein] + (6S)-5,6,7,8-tetrahydrofolate = N(6)-[(R)-dihydrolipoyl]-L-lysyl-[protein] + (6R)-5,10-methylene-5,6,7,8-tetrahydrofolate + NH4(+). Functionally, the glycine cleavage system catalyzes the degradation of glycine. This is Aminomethyltransferase from Listeria innocua serovar 6a (strain ATCC BAA-680 / CLIP 11262).